The sequence spans 665 residues: UvrABC system protein C (665 aa).

Positions E16 to V95 constitute a GIY-YIG domain. Residues D208–A243 enclose the UVR domain. The segment at E470–G507 is disordered. The segment covering S475–G491 has biased composition (low complexity).

Belongs to the UvrC family. In terms of assembly, interacts with UvrB in an incision complex.

The protein localises to the cytoplasm. Functionally, the UvrABC repair system catalyzes the recognition and processing of DNA lesions. UvrC both incises the 5' and 3' sides of the lesion. The N-terminal half is responsible for the 3' incision and the C-terminal half is responsible for the 5' incision. The protein is UvrABC system protein C of Salinispora tropica (strain ATCC BAA-916 / DSM 44818 / JCM 13857 / NBRC 105044 / CNB-440).